The primary structure comprises 226 residues: ATP-dependent dethiobiotin synthetase BioD (226 aa).

ATP is bound at residue 14–19; it reads GIGKTF. Threonine 18 lines the Mg(2+) pocket. Lysine 39 is an active-site residue. Serine 43 contacts substrate. ATP contacts are provided by residues aspartate 56, 117-120, 177-178, 206-208, and asparagine 213; these read EGVG, NT, and PHI. Mg(2+)-binding residues include aspartate 56 and glutamate 117.

It belongs to the dethiobiotin synthetase family. Homodimer. Mg(2+) serves as cofactor.

It is found in the cytoplasm. It catalyses the reaction (7R,8S)-7,8-diammoniononanoate + CO2 + ATP = (4R,5S)-dethiobiotin + ADP + phosphate + 3 H(+). It functions in the pathway cofactor biosynthesis; biotin biosynthesis; biotin from 7,8-diaminononanoate: step 1/2. In terms of biological role, catalyzes a mechanistically unusual reaction, the ATP-dependent insertion of CO2 between the N7 and N8 nitrogen atoms of 7,8-diaminopelargonic acid (DAPA, also called 7,8-diammoniononanoate) to form a ureido ring. The sequence is that of ATP-dependent dethiobiotin synthetase BioD from Xylella fastidiosa (strain Temecula1 / ATCC 700964).